The sequence spans 343 residues: Dihydroorotase (343 aa).

Zn(2+) contacts are provided by histidine 14 and histidine 16. Residues 16 to 18 (HVR) and asparagine 42 each bind substrate. Zn(2+)-binding residues include lysine 98, histidine 135, and histidine 173. An N6-carboxylysine modification is found at lysine 98. Histidine 135 is a substrate binding site. Leucine 219 contacts substrate. Aspartate 247 lines the Zn(2+) pocket. Aspartate 247 is a catalytic residue. The substrate site is built by histidine 251 and alanine 263.

Belongs to the metallo-dependent hydrolases superfamily. DHOase family. Class II DHOase subfamily. Homodimer. Zn(2+) is required as a cofactor.

It catalyses the reaction (S)-dihydroorotate + H2O = N-carbamoyl-L-aspartate + H(+). Its pathway is pyrimidine metabolism; UMP biosynthesis via de novo pathway; (S)-dihydroorotate from bicarbonate: step 3/3. In terms of biological role, catalyzes the reversible cyclization of carbamoyl aspartate to dihydroorotate. This Marinobacter nauticus (strain ATCC 700491 / DSM 11845 / VT8) (Marinobacter aquaeolei) protein is Dihydroorotase.